Here is a 737-residue protein sequence, read N- to C-terminus: Translation initiation factor IF-2 (737 aa).

Residues 55 to 152 form a disordered region; the sequence is KKKEHIQHNK…PVPPRKNKPL (98 aa). Basic and acidic residues predominate over residues 60 to 70; sequence IQHNKNKDNFH. Residues 88-98 show a composition bias toward basic residues; sequence KNVHKNNRKRS. Over residues 105-121 the composition is skewed to low complexity; it reads NNNAKNGQRNNRNNRSN. Residues 122–131 show a composition bias toward basic residues; that stretch reads NKFKNKRNNN. The segment covering 132–142 has biased composition (low complexity); it reads NKRNNNFKKGN. The tr-type G domain occupies 238–407; the sequence is KRPPVVTIMG…LLEAEMLELH (170 aa). The segment at 247–254 is G1; that stretch reads GHVDHGKT. Position 247-254 (247-254) interacts with GTP; sequence GHVDHGKT. A G2 region spans residues 272 to 276; that stretch reads GITQH. The segment at 293–296 is G3; the sequence is DTPG. GTP contacts are provided by residues 293-297 and 347-350; these read DTPGH and NKID. The segment at 347-350 is G4; the sequence is NKID. The interval 383 to 385 is G5; it reads SAK.

It belongs to the TRAFAC class translation factor GTPase superfamily. Classic translation factor GTPase family. IF-2 subfamily.

Its subcellular location is the cytoplasm. Functionally, one of the essential components for the initiation of protein synthesis. Protects formylmethionyl-tRNA from spontaneous hydrolysis and promotes its binding to the 30S ribosomal subunits. Also involved in the hydrolysis of GTP during the formation of the 70S ribosomal complex. The chain is Translation initiation factor IF-2 from Ligilactobacillus salivarius (strain UCC118) (Lactobacillus salivarius).